The sequence spans 485 residues: NADH-quinone oxidoreductase subunit N (485 aa).

The next 14 membrane-spanning stretches (helical) occupy residues Leu8–Ile28, Phe35–Val55, Gly71–Ala91, Phe105–Leu125, Ser127–Phe147, Tyr159–Ala179, Leu203–Phe223, Pro235–Met255, Val271–Gln291, Leu297–Gln317, Val326–Leu346, Ala373–Ile393, Trp408–Val430, and Ile455–Ile475.

Belongs to the complex I subunit 2 family. NDH-1 is composed of 13 different subunits. Subunits NuoA, H, J, K, L, M, N constitute the membrane sector of the complex.

Its subcellular location is the cell inner membrane. The catalysed reaction is a quinone + NADH + 5 H(+)(in) = a quinol + NAD(+) + 4 H(+)(out). In terms of biological role, NDH-1 shuttles electrons from NADH, via FMN and iron-sulfur (Fe-S) centers, to quinones in the respiratory chain. The immediate electron acceptor for the enzyme in this species is believed to be ubiquinone. Couples the redox reaction to proton translocation (for every two electrons transferred, four hydrogen ions are translocated across the cytoplasmic membrane), and thus conserves the redox energy in a proton gradient. The sequence is that of NADH-quinone oxidoreductase subunit N from Escherichia coli (strain ATCC 8739 / DSM 1576 / NBRC 3972 / NCIMB 8545 / WDCM 00012 / Crooks).